A 455-amino-acid chain; its full sequence is uncharacterized protein (455 aa).

The next 11 helical transmembrane spans lie at 26–46 (FGPGVVALGIIAAVTLLQLLI), 53–73 (GAWGAIASMWLGVHLVPISIG), 77–97 (LGVMPLLPVLLMVWATARSTA), 111–131 (WVVASALGGPLLMAAIALAVI), 146–166 (ALRAFTSVLVVHSVGAATGVW), 191–211 (AAGVLALLGLSGVVTAGSLVV), 232–252 (LTVLSVLYAPNVIVGTSAIAV), 256–276 (AHIGFATFSSFAVLGGDIPAL), 278–298 (ILAAAPTPPLGPAWVALLIVG), 323–343 (LLVAAVAGALVMAVLGYGGGG), and 357–377 (ALVLGVLFWFTFVGWVTVVIA). Residues 384 to 455 (PKRLRPAPPV…LSDEPPPRAD (72 aa)) are disordered.

Its subcellular location is the cell membrane. This is an uncharacterized protein from Mycobacterium tuberculosis (strain CDC 1551 / Oshkosh).